Here is a 310-residue protein sequence, read N- to C-terminus: DNA repair nuclease APEX1 (310 aa).

The interval Met1 to Arg51 is disordered. The segment covering Pro41–Arg51 has biased composition (basic and acidic residues). The Mg(2+) site is built by Asp63 and Glu89. Tyr164 is an active-site residue. Mg(2+)-binding residues include Asp203, Asn205, and Asp300. Asp203 serves as the catalytic Proton donor/acceptor.

Belongs to the DNA repair enzymes AP/ExoA family. Mg(2+) serves as cofactor. Mn(2+) is required as a cofactor.

The protein localises to the nucleus. The protein resides in the nucleolus. Its subcellular location is the nucleus speckle. It localises to the endoplasmic reticulum. It is found in the cytoplasm. The protein localises to the mitochondrion. It carries out the reaction Exonucleolytic cleavage in the 3'- to 5'-direction to yield nucleoside 5'-phosphates.. In terms of biological role, functions as an apurinic/apyrimidinic (AP) endodeoxyribonuclease in the DNA base excision repair (BER) pathway of DNA lesions induced by oxidative and alkylating agents. Initiates repair of AP sites in DNA by catalyzing hydrolytic incision of the phosphodiester backbone immediately adjacent to the damage, generating a single-strand break with 5'-deoxyribose phosphate and 3'-hydroxyl ends. Has 3'-5' exoribonuclease activity on mismatched deoxyribonucleotides at the 3' termini of nicked or gapped DNA molecules during short-patch BER. May also play a role in the epigenetic regulation of gene expression by participating in DNA demethylation. Required for passage through the mid-blastula transition MBT. May also act as an endoribonuclease involved in the control of single-stranded RNA metabolism. Has no redox activity. Binds DNA and RNA. The protein is DNA repair nuclease APEX1 (apex1) of Danio rerio (Zebrafish).